We begin with the raw amino-acid sequence, 288 residues long: Bifunctional protein FolD (288 aa).

NADP(+)-binding positions include 166 to 168 and Ile-232; that span reads GAS.

The protein belongs to the tetrahydrofolate dehydrogenase/cyclohydrolase family. In terms of assembly, homodimer.

It catalyses the reaction (6R)-5,10-methylene-5,6,7,8-tetrahydrofolate + NADP(+) = (6R)-5,10-methenyltetrahydrofolate + NADPH. The catalysed reaction is (6R)-5,10-methenyltetrahydrofolate + H2O = (6R)-10-formyltetrahydrofolate + H(+). The protein operates within one-carbon metabolism; tetrahydrofolate interconversion. Catalyzes the oxidation of 5,10-methylenetetrahydrofolate to 5,10-methenyltetrahydrofolate and then the hydrolysis of 5,10-methenyltetrahydrofolate to 10-formyltetrahydrofolate. The chain is Bifunctional protein FolD from Escherichia coli O139:H28 (strain E24377A / ETEC).